The following is a 469-amino-acid chain: 3-isopropylmalate dehydratase large subunit (469 aa).

C347, C410, and C413 together coordinate [4Fe-4S] cluster.

Belongs to the aconitase/IPM isomerase family. LeuC type 1 subfamily. Heterodimer of LeuC and LeuD. Requires [4Fe-4S] cluster as cofactor.

It catalyses the reaction (2R,3S)-3-isopropylmalate = (2S)-2-isopropylmalate. It functions in the pathway amino-acid biosynthesis; L-leucine biosynthesis; L-leucine from 3-methyl-2-oxobutanoate: step 2/4. Catalyzes the isomerization between 2-isopropylmalate and 3-isopropylmalate, via the formation of 2-isopropylmaleate. The chain is 3-isopropylmalate dehydratase large subunit from Burkholderia mallei (strain NCTC 10247).